We begin with the raw amino-acid sequence, 289 residues long: Phosphate import ATP-binding protein PstB (289 aa).

Residues 1 to 37 (MRSIDRPGGQAARPTIGSVAGASNTRTRDARSLPDTP) are disordered. Positions 41-284 (AAAENFSFYY…PVRRETEDYI (244 aa)) constitute an ABC transporter domain. ATP is bound at residue 73-80 (GPSGCGKS).

The protein belongs to the ABC transporter superfamily. Phosphate importer (TC 3.A.1.7) family. The complex is composed of two ATP-binding proteins (PstB), two transmembrane proteins (PstC and PstA) and a solute-binding protein (PstS).

It is found in the cell inner membrane. It carries out the reaction phosphate(out) + ATP + H2O = ADP + 2 phosphate(in) + H(+). Its function is as follows. Part of the ABC transporter complex PstSACB involved in phosphate import. Responsible for energy coupling to the transport system. The polypeptide is Phosphate import ATP-binding protein PstB (Aromatoleum aromaticum (strain DSM 19018 / LMG 30748 / EbN1) (Azoarcus sp. (strain EbN1))).